The sequence spans 348 residues: UDP-glucose 4-epimerase (348 aa).

Residues 12 to 14, 33 to 37, 66 to 67, phenylalanine 88, and lysine 92 contribute to the NAD(+) site; these read GYI, DNFHN, and DI. 132–134 provides a ligand contact to substrate; the sequence is SAT. Residue tyrosine 157 is the Proton acceptor of the active site. Lysine 161 and tyrosine 185 together coordinate NAD(+). Substrate is bound by residues 185 to 187, 206 to 208, 224 to 226, arginine 239, and 300 to 303; these read YFN, NNL, NVF, and REGD.

Belongs to the NAD(P)-dependent epimerase/dehydratase family. As to quaternary structure, homodimer. NAD(+) is required as a cofactor.

The catalysed reaction is UDP-alpha-D-glucose = UDP-alpha-D-galactose. The enzyme catalyses UDP-N-acetyl-alpha-D-glucosamine = UDP-N-acetyl-alpha-D-galactosamine. It functions in the pathway carbohydrate metabolism; galactose metabolism. Functionally, catalyzes two distinct but analogous reactions: the reversible epimerization of UDP-glucose to UDP-galactose and the reversible epimerization of UDP-N-acetylglucosamine to UDP-N-acetylgalactosamine. The reaction with UDP-Gal plays a critical role in the Leloir pathway of galactose catabolism in which galactose is converted to the glycolytic intermediate glucose 6-phosphate. It contributes to the catabolism of dietary galactose and enables the endogenous biosynthesis of both UDP-Gal and UDP-GalNAc when exogenous sources are limited. Both UDP-sugar interconversions are important in the synthesis of glycoproteins and glycolipids. In Bos taurus (Bovine), this protein is UDP-glucose 4-epimerase.